The following is a 295-amino-acid chain: Nucleotide-binding protein YvcJ (295 aa).

An ATP-binding site is contributed by 16-23; sequence GMSGAGKT. 67-70 contacts GTP; that stretch reads DLRG.

This sequence belongs to the RapZ-like family.

Displays ATPase and GTPase activities. Can also hydrolyze pNPP. May affect the expression of competence via the phosphorylation of a cellular component. The chain is Nucleotide-binding protein YvcJ (yvcJ) from Bacillus subtilis (strain 168).